The sequence spans 430 residues: Adenylosuccinate synthetase (430 aa).

GTP-binding positions include 17-23 (GDEGKGK) and 45-47 (GHT). Catalysis depends on aspartate 18, which acts as the Proton acceptor. Positions 18 and 45 each coordinate Mg(2+). Residues 18-21 (DEGK), 43-46 (NAGH), threonine 139, arginine 153, asparagine 229, threonine 244, and arginine 308 each bind IMP. Catalysis depends on histidine 46, which acts as the Proton donor. 304 to 310 (TVTGRRR) provides a ligand contact to substrate. GTP is bound by residues arginine 310, 336–338 (KLD), and 418–420 (GVG).

This sequence belongs to the adenylosuccinate synthetase family. As to quaternary structure, homodimer. Mg(2+) is required as a cofactor.

The protein localises to the cytoplasm. The catalysed reaction is IMP + L-aspartate + GTP = N(6)-(1,2-dicarboxyethyl)-AMP + GDP + phosphate + 2 H(+). It functions in the pathway purine metabolism; AMP biosynthesis via de novo pathway; AMP from IMP: step 1/2. Plays an important role in the de novo pathway and in the salvage pathway of purine nucleotide biosynthesis. Catalyzes the first committed step in the biosynthesis of AMP from IMP. The polypeptide is Adenylosuccinate synthetase (Cryptococcus neoformans var. neoformans serotype D (strain JEC21 / ATCC MYA-565) (Filobasidiella neoformans)).